A 220-amino-acid chain; its full sequence is VQ motif-containing protein 5 (220 aa).

Residues 49-57 carry the VQ motif; sequence FKSLVQQLT. Disordered stretches follow at residues 61 to 80 and 131 to 171; these read PCDR…PEPI and HMMA…GASS. Polar residues-rich tracts occupy residues 133–150 and 157–171; these read MAQS…QSNG and SWFN…GASS.

Its subcellular location is the nucleus. Functionally, may function as negative regulator of plant defense. This is VQ motif-containing protein 5 from Arabidopsis thaliana (Mouse-ear cress).